A 256-amino-acid chain; its full sequence is MNNIWWQTKGQGNVHLVLLHGWGLNAEVWRCIDEELSSHFTLHLVDLPGFGRSRGFGALSLAEMAEAVLRQAPDKAIWLGWSLGGLVASQIALTHPERVQALVTVASSPCFSARDEWPGIKPDVLAGFQQQLSDDFQRTVERFLALQTMGTETARQDARALKKTVLALPMPEVDVLNGGLEILKTVDLRLPLQNVPMPFLRLYGYLDGLVPRKVVPMLDKLWPHSESYIFAKAAHAPFISHPVEFRHVLVALKQRV.

The AB hydrolase-1 domain maps to His-15–Pro-242. Substrate is bound by residues Trp-22, Ser-82–Leu-83, and Phe-143–Gln-147. The active-site Nucleophile is Ser-82. Residues Asp-207 and His-235 contribute to the active site. His-235 contributes to the substrate binding site.

Belongs to the AB hydrolase superfamily. Carboxylesterase BioH family. As to quaternary structure, monomer.

Its subcellular location is the cytoplasm. The enzyme catalyses 6-carboxyhexanoyl-[ACP] methyl ester + H2O = 6-carboxyhexanoyl-[ACP] + methanol + H(+). It participates in cofactor biosynthesis; biotin biosynthesis. Functionally, the physiological role of BioH is to remove the methyl group introduced by BioC when the pimeloyl moiety is complete. It allows to synthesize pimeloyl-ACP via the fatty acid synthetic pathway through the hydrolysis of the ester bonds of pimeloyl-ACP esters. This Escherichia coli O157:H7 protein is Pimeloyl-[acyl-carrier protein] methyl ester esterase.